Reading from the N-terminus, the 213-residue chain is Ribosomal RNA small subunit methyltransferase G (213 aa).

S-adenosyl-L-methionine contacts are provided by residues Gly77, Met82, 104-106 (EKS), and Arg145.

This sequence belongs to the methyltransferase superfamily. RNA methyltransferase RsmG family.

It localises to the cytoplasm. The catalysed reaction is guanosine(527) in 16S rRNA + S-adenosyl-L-methionine = N(7)-methylguanosine(527) in 16S rRNA + S-adenosyl-L-homocysteine. In terms of biological role, specifically methylates the N7 position of guanine in position 527 of 16S rRNA. The protein is Ribosomal RNA small subunit methyltransferase G of Pelagibacter ubique (strain HTCC1062).